Reading from the N-terminus, the 344-residue chain is Olfactory receptor class A-like protein 4 (344 aa).

Topologically, residues 1–10 (MSEVLTVDAV) are extracellular. A helical transmembrane segment spans residues 11–31 (LFGLLVFSGIIGNIMVIYVVF). The Cytoplasmic segment spans residues 32–47 (DCAKLCASRHLPPSDT). The helical transmembrane segment at 48-68 (ILVHLCLANLLTSVFRTVPIF) threads the bilayer. Residues 69 to 84 (VSDLGLQVWLTAGWCR) are Extracellular-facing. A disulfide bridge connects residues Cys-83 and Cys-169. A helical membrane pass occupies residues 85-105 (VFMLLWVWWRAVGCWVTLALS). Over 106 to 130 (AFHCATLRRQHVSMGPLGHSRERRR) the chain is Cytoplasmic. Residues 131 to 151 (VWVVLAVVWAANLLFSLPALV) traverse the membrane as a helical segment. The Extracellular portion of the chain corresponds to 152–186 (YTTQVRGNATVELMVISCTTRPLLGCVWEFPTFQQ). The N-linked (GlcNAc...) asparagine glycan is linked to Asn-159. A helical membrane pass occupies residues 187 to 207 (GYAFASSSLALNEVLPLVLMV). Topologically, residues 208-246 (GTNLATLQALGKHIRTVRAGGSTGAELDRHVSSERKAGH) are cytoplasmic. Residues 247-267 (VIMALVALFVGCWVLQVAAVT) form a helical membrane-spanning segment. Residues 268–279 (YYNHNRGAHAEG) are Extracellular-facing. Residues 280–300 (LLTVAHFSASLFVGFSPLVVA) traverse the membrane as a helical segment. Topologically, residues 301–344 (LGHGKLRRRISGILQSCMHRLKQTQDKPAEITEKDGRTTQSAMK) are cytoplasmic. The span at 324–337 (TQDKPAEITEKDGR) shows a compositional bias: basic and acidic residues. Residues 324-344 (TQDKPAEITEKDGRTTQSAMK) form a disordered region.

Belongs to the G-protein coupled receptor 1 family. In terms of tissue distribution, highly expressed in the olfactory rosette. Specifically localizes to crypt neurons in the olfactory neuroepithelium. Colocalizes with the inhibitory G-protein gnaia in crypt neurons. Not detected in other tissues tested.

The protein resides in the cell membrane. Its function is as follows. Probable olfactory receptor. This chain is Olfactory receptor class A-like protein 4 (ora4), found in Danio rerio (Zebrafish).